The sequence spans 314 residues: Oxaloacetate tautomerase FAHD2A, mitochondrial (314 aa).

A mitochondrion-targeting transit peptide spans 1–84 (MLVSGRRRLL…ATLSVARRAL (84 aa)). Residues Glu-159, Glu-161, and Asp-190 each coordinate Mg(2+).

This sequence belongs to the FAH family. Mg(2+) serves as cofactor. It depends on Mn(2+) as a cofactor.

Its subcellular location is the mitochondrion. It catalyses the reaction oxaloacetate = enol-oxaloacetate. In terms of biological role, tautomerase that converts enol-oxaloacetate, a strong inhibitor of succinate dehydrogenase, to the physiological keto form of oxaloacetate. It is thereby required to maximize aerobic respiration efficiency by preventing succinate dehydrogenase inhibition. This chain is Oxaloacetate tautomerase FAHD2A, mitochondrial, found in Homo sapiens (Human).